Here is a 565-residue protein sequence, read N- to C-terminus: DNA ligase B (565 aa).

The active-site N6-AMP-lysine intermediate is Lys130.

Belongs to the NAD-dependent DNA ligase family. LigB subfamily.

The catalysed reaction is NAD(+) + (deoxyribonucleotide)n-3'-hydroxyl + 5'-phospho-(deoxyribonucleotide)m = (deoxyribonucleotide)n+m + AMP + beta-nicotinamide D-nucleotide.. Functionally, catalyzes the formation of phosphodiester linkages between 5'-phosphoryl and 3'-hydroxyl groups in double-stranded DNA using NAD as a coenzyme and as the energy source for the reaction. This is DNA ligase B from Yersinia enterocolitica serotype O:8 / biotype 1B (strain NCTC 13174 / 8081).